The primary structure comprises 116 residues: Large ribosomal subunit protein uL18 (116 aa).

This sequence belongs to the universal ribosomal protein uL18 family. In terms of assembly, part of the 50S ribosomal subunit; part of the 5S rRNA/L5/L18/L25 subcomplex. Contacts the 5S and 23S rRNAs.

This is one of the proteins that bind and probably mediate the attachment of the 5S RNA into the large ribosomal subunit, where it forms part of the central protuberance. The chain is Large ribosomal subunit protein uL18 from Shewanella sediminis (strain HAW-EB3).